Consider the following 447-residue polypeptide: Alkylglycerol monooxygenase (447 aa).

The next 2 membrane-spanning stretches (helical) occupy residues 43 to 63 (ATPFFIFLILLELVISWILKG) and 111 to 131 (WDSTWTWYFTFLGVDFGYYWF). In terms of domain architecture, Fatty acid hydroxylase spans 119 to 249 (FTFLGVDFGY…LIIWDRIFGT (131 aa)). A Histidine box-1 motif is present at residues 132–136 (HRMAH). Positions 145 to 149 (HQAHH) match the Histidine box-2 motif. Residues 170 to 190 (SWVFYCPLALFIPPSVFAVHI) form a helical membrane-spanning segment. Residues 221 to 225 (HRVHH) carry the Histidine box-3 motif. Transmembrane regions (helical) follow at residues 340–360 (VLQFAVMLAFYEETFANTAVL), 363–383 (VTLLLRIFFFILTLTSIGFLL), and 413–433 (IPSLSFAFEIFFSVCIAFWGV).

The protein belongs to the sterol desaturase family. TMEM195 subfamily. It depends on Fe cation as a cofactor. Highly expressed in lever and small intestine.

The protein resides in the endoplasmic reticulum membrane. The enzyme catalyses 1-O-(1,2-saturated-alkyl)-sn-glycerol + (6R)-L-erythro-5,6,7,8-tetrahydrobiopterin + O2 = a 1-(1-hydroxyalkyl)-sn-glycerol + (6R)-L-erythro-6,7-dihydrobiopterin + H2O. Glyceryl-ether monooxygenase that cleaves the O-alkyl bond of ether lipids. Ether lipids are essential components of brain membranes. This chain is Alkylglycerol monooxygenase (Agmo), found in Mus musculus (Mouse).